A 162-amino-acid polypeptide reads, in one-letter code: Circumsporozoite protein-related antigen (162 aa).

An N-terminal signal peptide occupies residues 1–16 (MKILSVFFLALFFIIF). 2 disordered regions span residues 24 to 44 (KTNKGTGSGVSSKKKNKKGSG) and 109 to 162 (PFKI…GPEH). The segment covering 114 to 130 (SSDPADNANPDADSESN) has biased composition (low complexity). A compositionally biased stretch (polar residues) spans 137–162 (PQVTAQDVTPEQPQGDDNNLVSGPEH).

This Plasmodium falciparum protein is Circumsporozoite protein-related antigen.